The chain runs to 153 residues: ATP synthase subunit b' (153 aa).

The chain crosses the membrane as a helical span at residues 23–40 (LMAIQVVALTYILNSLFF).

The protein belongs to the ATPase B chain family. F-type ATPases have 2 components, F(1) - the catalytic core - and F(0) - the membrane proton channel. F(1) has five subunits: alpha(3), beta(3), gamma(1), delta(1), epsilon(1). F(0) has four main subunits: a(1), b(1), b'(1) and c(10-14). The alpha and beta chains form an alternating ring which encloses part of the gamma chain. F(1) is attached to F(0) by a central stalk formed by the gamma and epsilon chains, while a peripheral stalk is formed by the delta, b and b' chains.

It localises to the cellular thylakoid membrane. Its function is as follows. F(1)F(0) ATP synthase produces ATP from ADP in the presence of a proton or sodium gradient. F-type ATPases consist of two structural domains, F(1) containing the extramembraneous catalytic core and F(0) containing the membrane proton channel, linked together by a central stalk and a peripheral stalk. During catalysis, ATP synthesis in the catalytic domain of F(1) is coupled via a rotary mechanism of the central stalk subunits to proton translocation. Functionally, component of the F(0) channel, it forms part of the peripheral stalk, linking F(1) to F(0). The b'-subunit is a diverged and duplicated form of b found in plants and photosynthetic bacteria. The sequence is that of ATP synthase subunit b' from Prochlorococcus marinus (strain MIT 9301).